Here is a 498-residue protein sequence, read N- to C-terminus: Protein DETOXIFICATION 30 (498 aa).

Helical transmembrane passes span 64-86 (YSLG…AAVS), 91-111 (VIAG…ETLC), 136-156 (VTAV…AFIG), 161-181 (ISSA…AYAV), 197-217 (VMAA…WFVI), 227-247 (LAVV…VYIF), 277-297 (AVML…AGYL), 302-322 (ISVA…MIAI), 349-369 (LVAV…LLIF), 393-413 (ILAV…VAVG), 419-439 (VVAY…GLLL), and 447-467 (VMGI…VLTW).

The protein belongs to the multi antimicrobial extrusion (MATE) (TC 2.A.66.1) family.

It localises to the membrane. In Arabidopsis thaliana (Mouse-ear cress), this protein is Protein DETOXIFICATION 30.